The chain runs to 276 residues: Adenylate kinase (276 aa).

Residue glycine 38–threonine 43 coordinates ATP. Residues serine 58–valine 87 form an NMP region. AMP-binding positions include threonine 59, arginine 64, glycine 85–valine 87, glycine 113–arginine 116, and glutamine 120. Positions glycine 154–aspartate 191 are LID. ATP-binding positions include arginine 155 and serine 164–tyrosine 165. The AMP site is built by arginine 188 and arginine 199. Residue lysine 227 participates in ATP binding.

This sequence belongs to the adenylate kinase family. AK2 subfamily. Monomer.

The protein localises to the cytoplasm. The protein resides in the cytosol. It is found in the mitochondrion intermembrane space. The enzyme catalyses AMP + ATP = 2 ADP. In terms of biological role, catalyzes the reversible transfer of the terminal phosphate group between ATP and AMP. Plays an important role in cellular energy homeostasis and in adenine nucleotide metabolism. Adenylate kinase activity is critical for regulation of the phosphate utilization and the AMP de novo biosynthesis pathways. The sequence is that of Adenylate kinase (adkA) from Dictyostelium discoideum (Social amoeba).